Reading from the N-terminus, the 308-residue chain is N-acetylneuraminate lyase (308 aa).

Aceneuramate is bound by residues Thr50 and Thr51. Tyr142 functions as the Proton donor in the catalytic mechanism. Lys172 serves as the catalytic Schiff-base intermediate with substrate. Residues Ser174, Gly198, Asp200, Glu201, and Ser217 each contribute to the aceneuramate site.

Belongs to the DapA family. NanA subfamily. As to quaternary structure, homotetramer.

Its subcellular location is the cytoplasm. It catalyses the reaction aceneuramate = aldehydo-N-acetyl-D-mannosamine + pyruvate. The protein operates within amino-sugar metabolism; N-acetylneuraminate degradation. In terms of biological role, catalyzes the cleavage of N-acetylneuraminic acid (sialic acid) to form pyruvate and N-acetylmannosamine via a Schiff base intermediate. It prevents sialic acids from being recycled and returning to the cell surface. Involved in the N-glycolylneuraminic acid (Neu5Gc) degradation pathway. In Gallus gallus (Chicken), this protein is N-acetylneuraminate lyase.